A 237-amino-acid polypeptide reads, in one-letter code: Sugar fermentation stimulation protein homolog (237 aa).

This sequence belongs to the SfsA family.

The chain is Sugar fermentation stimulation protein homolog from Pseudomonas putida (strain ATCC 47054 / DSM 6125 / CFBP 8728 / NCIMB 11950 / KT2440).